The primary structure comprises 374 residues: Protein Brevis radix-like 2 (374 aa).

Disordered regions lie at residues 12-43 and 57-80; these read NTNNGGSKKQEEDEEEEDRVIETPRSKQIKSL and AYKSCKPCSGSSNQNKNRSYADSD. The span at 65 to 80 shows a compositional bias: polar residues; the sequence is SGSSNQNKNRSYADSD. Positions 143-198 constitute a BRX 1 domain; it reads KEWVAQVEPGVLITFVSLPEGGNDMKRIRFSREMFDKWQAQKWWAENFDKVMELYN. Residues 205-316 are disordered; that stretch reads QSVPLPTPPR…EELSVSNASD (112 aa). Composition is skewed to polar residues over residues 246–259 and 267–288; these read SSGSLAHQPTTQTQ and GLATTPKLSSISGTKTETSSVD. Positions 289–307 are enriched in basic and acidic residues; it reads ESARSSFSREEEEADHSGE. A BRX 2 domain is found at 319–374; sequence TEWVEQDEAGVYITIRALPDGTRELRRVRFSREKFGETNARLWWEQNRARIQQQYL.

It belongs to the BRX family. As to expression, expressed in roots.

It localises to the nucleus. The polypeptide is Protein Brevis radix-like 2 (BRXL2) (Arabidopsis thaliana (Mouse-ear cress)).